An 83-amino-acid chain; its full sequence is uncharacterized protein (83 aa).

The interval 15–36 is disordered; that stretch reads RLKNGRGNKTMSESDYNTSDSG. Residues 21–35 show a composition bias toward polar residues; it reads GNKTMSESDYNTSDS.

This is an uncharacterized protein from Aedes vexans (Inland floodwater mosquito).